The sequence spans 156 residues: 6,7-dimethyl-8-ribityllumazine synthase (156 aa).

Residues Phe-22, 57–59, and 81–83 contribute to the 5-amino-6-(D-ribitylamino)uracil site; these read AVE and CVI. Residue 86-87 participates in (2S)-2-hydroxy-3-oxobutyl phosphate binding; that stretch reads GT. The Proton donor role is filled by His-89. Position 114 (Phe-114) interacts with 5-amino-6-(D-ribitylamino)uracil. Residue Arg-128 participates in (2S)-2-hydroxy-3-oxobutyl phosphate binding.

This sequence belongs to the DMRL synthase family. In terms of assembly, forms an icosahedral capsid composed of 60 subunits, arranged as a dodecamer of pentamers.

The enzyme catalyses (2S)-2-hydroxy-3-oxobutyl phosphate + 5-amino-6-(D-ribitylamino)uracil = 6,7-dimethyl-8-(1-D-ribityl)lumazine + phosphate + 2 H2O + H(+). It participates in cofactor biosynthesis; riboflavin biosynthesis; riboflavin from 2-hydroxy-3-oxobutyl phosphate and 5-amino-6-(D-ribitylamino)uracil: step 1/2. Functionally, catalyzes the formation of 6,7-dimethyl-8-ribityllumazine by condensation of 5-amino-6-(D-ribitylamino)uracil with 3,4-dihydroxy-2-butanone 4-phosphate. This is the penultimate step in the biosynthesis of riboflavin. This chain is 6,7-dimethyl-8-ribityllumazine synthase, found in Vibrio cholerae serotype O1 (strain ATCC 39315 / El Tor Inaba N16961).